A 337-amino-acid chain; its full sequence is Casein kinase I isoform alpha-like (337 aa).

An N6-acetyllysine modification is found at lysine 8. The Protein kinase domain occupies 17–285 (YKLVRKIGSG…YLRQLFRILF (269 aa)). Residues 23-31 (IGSGSFGDV) and lysine 46 contribute to the ATP site. Catalysis depends on aspartate 136, which acts as the Proton acceptor. Over residues 309-325 (AASSSGQGQQAQTQTGK) the composition is skewed to low complexity. Positions 309–337 (AASSSGQGQQAQTQTGKQTEKNKNNVKDN) are disordered. Residues 326 to 337 (QTEKNKNNVKDN) are compositionally biased toward basic and acidic residues.

It belongs to the protein kinase superfamily. CK1 Ser/Thr protein kinase family. Casein kinase I subfamily. In terms of assembly, interacts with FAM83A, FAM83B, FAM83C, FAM83D, FAM83E, FAM83F, FAM83G and FAM83H (via DUF1669).

Its subcellular location is the cytoplasm. The enzyme catalyses L-seryl-[protein] + ATP = O-phospho-L-seryl-[protein] + ADP + H(+). It catalyses the reaction L-threonyl-[protein] + ATP = O-phospho-L-threonyl-[protein] + ADP + H(+). Its function is as follows. Casein kinases are operationally defined by their preferential utilization of acidic proteins such as caseins as substrates. It can phosphorylate a large number of proteins. Participates in Wnt signaling. In Homo sapiens (Human), this protein is Casein kinase I isoform alpha-like (CSNK1A1L).